We begin with the raw amino-acid sequence, 239 residues long: Large ribosomal subunit protein uL30 (239 aa).

Residues 1 to 22 are disordered; sequence MEGVMSEAPQSSIRKKEYEARM.

Belongs to the universal ribosomal protein uL30 family.

The chain is Large ribosomal subunit protein uL30 (RPL7) from Encephalitozoon cuniculi (strain GB-M1) (Microsporidian parasite).